Here is a 629-residue protein sequence, read N- to C-terminus: Phosphomethylpyrimidine synthase (629 aa).

Residues N215, M244, Y273, H309, 329–331 (SRG), 370–373 (DGLR), and E409 each bind substrate. H413 is a Zn(2+) binding site. Substrate is bound at residue Y436. Zn(2+) is bound at residue H477. [4Fe-4S] cluster contacts are provided by C557, C560, and C565. Residues 589-610 (ENIKRETSAEEAEEAREGMSDM) are disordered.

The protein belongs to the ThiC family. Homodimer. [4Fe-4S] cluster is required as a cofactor.

It carries out the reaction 5-amino-1-(5-phospho-beta-D-ribosyl)imidazole + S-adenosyl-L-methionine = 4-amino-2-methyl-5-(phosphooxymethyl)pyrimidine + CO + 5'-deoxyadenosine + formate + L-methionine + 3 H(+). The protein operates within cofactor biosynthesis; thiamine diphosphate biosynthesis. In terms of biological role, catalyzes the synthesis of the hydroxymethylpyrimidine phosphate (HMP-P) moiety of thiamine from aminoimidazole ribotide (AIR) in a radical S-adenosyl-L-methionine (SAM)-dependent reaction. This is Phosphomethylpyrimidine synthase from Erythrobacter litoralis (strain HTCC2594).